Reading from the N-terminus, the 660-residue chain is Kinesin-like protein KIF2A (660 aa).

The interval 1 to 140 (MVTSLNEDNE…QQELREKRAQ (140 aa)) is disordered. The segment at 1 to 171 (MVTSLNEDNE…LDYRPLTTAD (171 aa)) is globular. The residue at position 48 (serine 48) is a Phosphoserine. 2 positions are modified to phosphothreonine: threonine 51 and threonine 70. The residue at position 73 (serine 73) is a Phosphoserine. Residue lysine 75 is modified to N6-acetyllysine. Over residues 96 to 106 (LPEQSSSAQQN) the composition is skewed to polar residues. Positions 113–140 (CVKEVEKLQEKREKRRLQQQELREKRAQ) are enriched in basic and acidic residues. One can recognise a Kinesin motor domain in the interval 177–507 (RICVCVRKRP…LRYANRVKEL (331 aa)). 267–274 (GQTGSGKT) serves as a coordination point for ATP. A coiled-coil region spans residues 614–653 (ATQLEAILEQKIDILTELRDKVKSFRAALQEEEQASKQIN).

It belongs to the TRAFAC class myosin-kinesin ATPase superfamily. Kinesin family. MCAK/KIF2 subfamily. Interacts with AURKA and PLK1. Interacts with PSRC1. Interacts with MCRS1; the interaction enhances recruitment of KIF2A to the minus ends of spindle microtubules which promotes chromosome alignment.

It localises to the cytoplasm. The protein localises to the cytoskeleton. The protein resides in the microtubule organizing center. Its subcellular location is the centrosome. It is found in the spindle pole. It localises to the spindle. Functionally, plus end-directed microtubule-dependent motor required for normal brain development. May regulate microtubule dynamics during axonal growth. Required for normal progression through mitosis. Required for normal congress of chromosomes at the metaphase plate. Required for normal spindle dynamics during mitosis. Promotes spindle turnover. Implicated in formation of bipolar mitotic spindles. Has microtubule depolymerization activity. The protein is Kinesin-like protein KIF2A (KIF2A) of Bos taurus (Bovine).